The following is a 161-amino-acid chain: Globin CTT-VIIB-10 (161 aa).

Residues 1 to 16 (MKFFAVLALCIVGAIA) form the signal peptide. One can recognise a Globin domain in the interval 18–161 (PLTADEASLV…NTFAIVVPRL (144 aa)). The heme b site is built by His-76 and His-111.

It belongs to the globin family. In terms of assembly, homodimer.

The protein is Globin CTT-VIIB-10 (CTT-7B10) of Chironomus thummi thummi (Midge).